Consider the following 378-residue polypeptide: Protein RecA (378 aa).

66-73 (GPESSGKT) contributes to the ATP binding site. The segment at 333–378 (PDAAKAEAATDAAAAADTAGTDDAAKSVPAPASKTAKATKATAVKS) is disordered. Positions 338 to 378 (AEAATDAAAAADTAGTDDAAKSVPAPASKTAKATKATAVKS) are enriched in low complexity.

This sequence belongs to the RecA family.

The protein localises to the cytoplasm. Its function is as follows. Can catalyze the hydrolysis of ATP in the presence of single-stranded DNA, the ATP-dependent uptake of single-stranded DNA by duplex DNA, and the ATP-dependent hybridization of homologous single-stranded DNAs. It interacts with LexA causing its activation and leading to its autocatalytic cleavage. The protein is Protein RecA of Streptomyces venezuelae (strain ATCC 10712 / CBS 650.69 / DSM 40230 / JCM 4526 / NBRC 13096 / PD 04745).